The following is a 177-amino-acid chain: MADFNQILTPGDVDGGIINVVNEIPAGSNHKIEWNRKLAAFQLDRVEPAIFAKPTNYGFIPQTLDEDGDELDVLLVTEQPLATGVFLEARVIGVMKFVDDGEVDDKIVCVPADDRNNGNAYKTLSDLPQQLIKQIEFHFNHYKDLKKAGTTKVESWGDAEEAKKVIKESIERWNKQA.

Substrate-binding residues include K31, R45, and Y57. Residues D67, D72, and D104 each coordinate Mg(2+). Position 142 (Y142) interacts with substrate.

It belongs to the PPase family. Homohexamer. It depends on Mg(2+) as a cofactor.

It is found in the cytoplasm. The enzyme catalyses diphosphate + H2O = 2 phosphate + H(+). Functionally, catalyzes the hydrolysis of inorganic pyrophosphate (PPi) forming two phosphate ions. This Neisseria meningitidis serogroup B (strain ATCC BAA-335 / MC58) protein is Inorganic pyrophosphatase.